A 276-amino-acid polypeptide reads, in one-letter code: Large ribosomal subunit protein uL2 (276 aa).

The segment at 224–276 (AMNPIDHPHGGGEGKTSGGRNPVTPWGVSTKGKKTRKKNKSSNKYIKRVSDKG) is disordered. Basic residues predominate over residues 254-270 (KGKKTRKKNKSSNKYIK).

The protein belongs to the universal ribosomal protein uL2 family. In terms of assembly, part of the 50S ribosomal subunit. Forms a bridge to the 30S subunit in the 70S ribosome.

Functionally, one of the primary rRNA binding proteins. Required for association of the 30S and 50S subunits to form the 70S ribosome, for tRNA binding and peptide bond formation. It has been suggested to have peptidyltransferase activity; this is somewhat controversial. Makes several contacts with the 16S rRNA in the 70S ribosome. The chain is Large ribosomal subunit protein uL2 from Ehrlichia ruminantium (strain Gardel).